Here is a 119-residue protein sequence, read N- to C-terminus: Non-structural protein 3b (119 aa).

The DRBM domain occupies 2-83; that stretch reads DYVSLLNQFW…ARLICEQLQA (82 aa).

As to quaternary structure, interacts with host RUNX1 isoform b.

The protein resides in the host nucleus. It is found in the host nucleolus. Its subcellular location is the host mitochondrion. Its function is as follows. Induces host cell G0/G1 arrest and apoptosis. The chain is Non-structural protein 3b from Tylonycteris pachypus (Lesser bamboo bat).